We begin with the raw amino-acid sequence, 431 residues long: MSTIIDVYAREVLDSRGNPTVEVEVYTESGAFGRAIVPSGASTGEHEAVELRDGDKSRYLGKGVMNAVNNVNEAIAPEIVGFDVTDQAGIDRAMIELDGTPNKGKLGANAILGVSMAVAHAAADFVGLPLYRYLGGFNAKQLPTPMMNIINGGSHADNNVDFQEFMILPVGAPTFKESIRMGAEVFHALKAVLHDKGLNTAVGDEGGFAPNLGSNREALEVIIEAIEKAGYKAGENVFLGMDVASSEFYNKETGKYDLAGEGRTGLTSAEMVDFYEELCKDFPIISIEDGLDENDWDGHKLLTERLGDKVQLVGDDLFVTNTQKLAEGIEKGISNSILIKVNQIGTLTETFEAIEMAKRAGYTAVVSHRSGETEDATIADIAVATNAGQIKTGSMSRTDRIAKYNQLLRIEDELGEIAVYDGIKSFYNIKR.

Residue glutamine 163 coordinates (2R)-2-phosphoglycerate. Glutamate 205 serves as the catalytic Proton donor. Residues aspartate 242, glutamate 288, and aspartate 315 each coordinate Mg(2+). 4 residues coordinate (2R)-2-phosphoglycerate: lysine 340, arginine 369, serine 370, and lysine 391. Lysine 340 functions as the Proton acceptor in the catalytic mechanism.

It belongs to the enolase family. Mg(2+) serves as cofactor.

It localises to the cytoplasm. Its subcellular location is the secreted. It is found in the cell surface. The enzyme catalyses (2R)-2-phosphoglycerate = phosphoenolpyruvate + H2O. The protein operates within carbohydrate degradation; glycolysis; pyruvate from D-glyceraldehyde 3-phosphate: step 4/5. Functionally, catalyzes the reversible conversion of 2-phosphoglycerate (2-PG) into phosphoenolpyruvate (PEP). It is essential for the degradation of carbohydrates via glycolysis. The polypeptide is Enolase (Bacillus cereus (strain ZK / E33L)).